The chain runs to 361 residues: Queuine tRNA-ribosyltransferase (361 aa).

Residue D92 is the Proton acceptor of the active site. Substrate contacts are provided by residues 92 to 96 (DSGGF), D146, Q189, and G216. The tract at residues 247–253 (GVGKPAD) is RNA binding. Catalysis depends on D266, which acts as the Nucleophile. The segment at 271 to 275 (TRSGR) is RNA binding; important for wobble base 34 recognition. Zn(2+) is bound by residues C304, C306, C309, and H335.

It belongs to the queuine tRNA-ribosyltransferase family. As to quaternary structure, homodimer. Within each dimer, one monomer is responsible for RNA recognition and catalysis, while the other monomer binds to the replacement base PreQ1. It depends on Zn(2+) as a cofactor.

It catalyses the reaction 7-aminomethyl-7-carbaguanine + guanosine(34) in tRNA = 7-aminomethyl-7-carbaguanosine(34) in tRNA + guanine. It functions in the pathway tRNA modification; tRNA-queuosine biosynthesis. Catalyzes the base-exchange of a guanine (G) residue with the queuine precursor 7-aminomethyl-7-deazaguanine (PreQ1) at position 34 (anticodon wobble position) in tRNAs with GU(N) anticodons (tRNA-Asp, -Asn, -His and -Tyr). Catalysis occurs through a double-displacement mechanism. The nucleophile active site attacks the C1' of nucleotide 34 to detach the guanine base from the RNA, forming a covalent enzyme-RNA intermediate. The proton acceptor active site deprotonates the incoming PreQ1, allowing a nucleophilic attack on the C1' of the ribose to form the product. After dissociation, two additional enzymatic reactions on the tRNA convert PreQ1 to queuine (Q), resulting in the hypermodified nucleoside queuosine (7-(((4,5-cis-dihydroxy-2-cyclopenten-1-yl)amino)methyl)-7-deazaguanosine). The protein is Queuine tRNA-ribosyltransferase of Rickettsia canadensis (strain McKiel).